The following is a 499-amino-acid chain: Cytochrome P450 monooxygenase ausI (499 aa).

Residues 10 to 30 form a helical membrane-spanning segment; sequence PLGQPLIAGFVVVSAVLYLLY. Cys439 contributes to the heme binding site. Asn483 carries N-linked (GlcNAc...) asparagine glycosylation.

This sequence belongs to the cytochrome P450 family. It depends on heme as a cofactor.

The protein resides in the membrane. It functions in the pathway secondary metabolite biosynthesis; terpenoid biosynthesis. Functionally, cytochrome P450 monooxygenase; part of the gene cluster B that mediates the biosynthesis of austinol and dehydroaustinol, two fungal meroterpenoids. The first step of the pathway is the synthesis of 3,5-dimethylorsellinic acid by the polyketide synthase ausA. 3,5-dimethylorsellinic acid is then prenylated by the polyprenyl transferase ausN. Further epoxidation by the FAD-dependent monooxygenase ausM and cyclization by the probable terpene cyclase ausL lead to the formation of protoaustinoid A. Protoaustinoid A is then oxidized to spiro-lactone preaustinoid A3 by the combined action of the FAD-binding monooxygenases ausB and ausC, and the dioxygenase ausE. Acid-catalyzed keto-rearrangement and ring contraction of the tetraketide portion of preaustinoid A3 by ausJ lead to the formation of preaustinoid A4. The aldo-keto reductase ausK, with the help of ausH, is involved in the next step by transforming preaustinoid A4 into isoaustinone which is in turn hydroxylated by the P450 monooxygenase ausI to form austinolide. Finally, the cytochrome P450 monooxygenase ausG modifies austinolide to austinol. Austinol can be further modified to dehydroaustinol which forms a diffusible complex with diorcinol that initiates conidiation. Due to genetic rearrangements of the clusters and the subsequent loss of some enzymes, the end products of the Emericella nidulans austinoid biosynthesis clusters are austinol and dehydroaustinol, even if additional enzymes, such as the O-acetyltransferase ausQ and the cytochrome P450 monooxygenase ausR are still functional. The protein is Cytochrome P450 monooxygenase ausI of Emericella nidulans (strain FGSC A4 / ATCC 38163 / CBS 112.46 / NRRL 194 / M139) (Aspergillus nidulans).